The sequence spans 124 residues: Competence protein ComGG (124 aa).

Residues 1–28 (MYRTRGFIYPAVLFVSALVLLIVNFVAA) form the signal peptide.

As to quaternary structure, the transformation pili are flexible filaments, consisting mainly of the major pilin ComGC and smaller amounts of the minor pilins, including at least ComGD, ComGF and ComGG. Interacts with ComGC; the interaction is probably direct. Interacts with ComGD. Interacts with ComGF. May act as a link between ComGC, ComGD and ComGF. Homodimer; disulfide-linked. A minor fraction of ComGG is found as a disulfide-bonded homodimer. Post-translationally, partial processing of ComGG in competent cells requires ComC.

It is found in the cell membrane. The protein resides in the secreted. Functionally, required for formation of the type IV-like pilus (T4P) that plays a role in transformation. Transformation pili are dynamically extended and retracted, perhaps thereby promoting DNA uptake and transformation. Required for transformation and DNA binding. The chain is Competence protein ComGG (comGG) from Bacillus subtilis (strain 168).